We begin with the raw amino-acid sequence, 104 residues long: Small ribosomal subunit protein uS10 (104 aa).

It belongs to the universal ribosomal protein uS10 family. In terms of assembly, part of the 30S ribosomal subunit.

In terms of biological role, involved in the binding of tRNA to the ribosomes. This chain is Small ribosomal subunit protein uS10, found in Alkaliphilus oremlandii (strain OhILAs) (Clostridium oremlandii (strain OhILAs)).